We begin with the raw amino-acid sequence, 189 residues long: Xanthine phosphoribosyltransferase (189 aa).

Residues Leu20 and Asn27 each contribute to the xanthine site. Position 128 to 132 (128 to 132 (ANGEA)) interacts with 5-phospho-alpha-D-ribose 1-diphosphate. Lys156 lines the xanthine pocket.

This sequence belongs to the purine/pyrimidine phosphoribosyltransferase family. Xpt subfamily. In terms of assembly, homodimer.

The protein resides in the cytoplasm. The enzyme catalyses XMP + diphosphate = xanthine + 5-phospho-alpha-D-ribose 1-diphosphate. It participates in purine metabolism; XMP biosynthesis via salvage pathway; XMP from xanthine: step 1/1. Converts the preformed base xanthine, a product of nucleic acid breakdown, to xanthosine 5'-monophosphate (XMP), so it can be reused for RNA or DNA synthesis. The polypeptide is Xanthine phosphoribosyltransferase (Lactobacillus delbrueckii subsp. bulgaricus (strain ATCC 11842 / DSM 20081 / BCRC 10696 / JCM 1002 / NBRC 13953 / NCIMB 11778 / NCTC 12712 / WDCM 00102 / Lb 14)).